Reading from the N-terminus, the 354-residue chain is 3'-5' exonuclease (354 aa).

A disordered region spans residues 1–120 (MEKYLIKMPI…PSPEKEKPEK (120 aa)). Residues 36-50 (TKKDTPKELKDKENA) are compositionally biased toward basic and acidic residues. The segment covering 59 to 70 (TKGRPGRPAVKR) has biased composition (basic residues). The span at 71 to 91 (KNLDNPDAKAEKKATEEENPP) shows a compositional bias: basic and acidic residues. Phosphoserine is present on residues serine 104, serine 110, and serine 112. A 3'-5' exonuclease domain is found at 146-314 (VLQWVEKQKD…GQVIYRELER (169 aa)). Residues aspartate 163, glutamate 165, and aspartate 301 each coordinate Mg(2+).

It belongs to the WRNexo family.

The protein localises to the nucleus. Functionally, has exonuclease activity on both single-stranded and duplex templates bearing overhangs, but not blunt ended duplex DNA, and cleaves in a 3'-5' direction. Essential for the formation of DNA replication focal centers. Has an important role in maintaining genome stability. The polypeptide is 3'-5' exonuclease (Drosophila yakuba (Fruit fly)).